Consider the following 332-residue polypeptide: Fructose-1,6-bisphosphatase class 1 (332 aa).

Residues Glu-94, Asp-116, Leu-118, and Asp-119 each contribute to the Mg(2+) site. Residues 119-122, Asn-211, Tyr-239, 257-259, and Lys-269 each bind substrate; these read DGSS and YLY. Position 275 (Glu-275) interacts with Mg(2+).

This sequence belongs to the FBPase class 1 family. In terms of assembly, homotetramer. Mg(2+) is required as a cofactor.

It is found in the cytoplasm. The catalysed reaction is beta-D-fructose 1,6-bisphosphate + H2O = beta-D-fructose 6-phosphate + phosphate. Its pathway is carbohydrate biosynthesis; Calvin cycle. The protein is Fructose-1,6-bisphosphatase class 1 of Synechococcus sp. (strain JA-3-3Ab) (Cyanobacteria bacterium Yellowstone A-Prime).